The sequence spans 161 residues: 2-C-methyl-D-erythritol 2,4-cyclodiphosphate synthase (161 aa).

The a divalent metal cation site is built by D9 and H11. 4-CDP-2-C-methyl-D-erythritol 2-phosphate is bound by residues 9–11 and 37–38; these read DFH and HS. H45 lines the a divalent metal cation pocket. Residues 59–61, 64–68, 135–138, and R145 each bind 4-CDP-2-C-methyl-D-erythritol 2-phosphate; these read DIG, FPDTD, and TTTE.

The protein belongs to the IspF family. Homotrimer. A divalent metal cation is required as a cofactor.

It catalyses the reaction 4-CDP-2-C-methyl-D-erythritol 2-phosphate = 2-C-methyl-D-erythritol 2,4-cyclic diphosphate + CMP. The protein operates within isoprenoid biosynthesis; isopentenyl diphosphate biosynthesis via DXP pathway; isopentenyl diphosphate from 1-deoxy-D-xylulose 5-phosphate: step 4/6. In terms of biological role, involved in the biosynthesis of isopentenyl diphosphate (IPP) and dimethylallyl diphosphate (DMAPP), two major building blocks of isoprenoid compounds. Catalyzes the conversion of 4-diphosphocytidyl-2-C-methyl-D-erythritol 2-phosphate (CDP-ME2P) to 2-C-methyl-D-erythritol 2,4-cyclodiphosphate (ME-CPP) with a corresponding release of cytidine 5-monophosphate (CMP). This chain is 2-C-methyl-D-erythritol 2,4-cyclodiphosphate synthase, found in Leptospira interrogans serogroup Icterohaemorrhagiae serovar Lai (strain 56601).